Reading from the N-terminus, the 131-residue chain is Small ribosomal subunit protein uS8 (131 aa).

It belongs to the universal ribosomal protein uS8 family. In terms of assembly, part of the 30S ribosomal subunit. Contacts proteins S5 and S12.

In terms of biological role, one of the primary rRNA binding proteins, it binds directly to 16S rRNA central domain where it helps coordinate assembly of the platform of the 30S subunit. The chain is Small ribosomal subunit protein uS8 from Polaromonas sp. (strain JS666 / ATCC BAA-500).